A 618-amino-acid chain; its full sequence is Paraneoplastic antigen-like protein 5 (618 aa).

Positions 390 to 399 are enriched in basic and acidic residues; the sequence is AGEEGQRKES. 3 disordered regions span residues 390–409, 451–475, and 519–549; these read AGEE…EPDE, RDTL…EGQQ, and SMIT…ELRM.

The protein belongs to the PNMA family. As to expression, restricted to testis, where expression is low. Not detected in the brain.

The protein resides in the nucleus. The sequence is that of Paraneoplastic antigen-like protein 5 (Pnma5) from Mus musculus (Mouse).